The following is a 242-amino-acid chain: MKVSLFITCLSDVFFPQVGKSVVEIMNQCGVELDFPEGQTCCGQPAYNSGYQEDAKLAAKQMIKAFEHSEYIVTPSGSCASMVHHYYKEMFKGDSEWYEKAVHLADRTYELTDFVVNILGKNDWKSKLVEKAVFHQSCHMSRALGIKEEPLKLLSQVEGLDIKELPYCQDCCGFGGTFAVKMSSISETMVDEKIKHIEATEANLLIGADMGCLMNIGGRLRRENKNIQVLHVAEVLAKGLNK.

The protein belongs to the LutA/YkgE family.

Is involved in L-lactate degradation and allows cells to grow with lactate as the sole carbon source. The protein is Lactate utilization protein A 1 of Bacillus anthracis (strain CDC 684 / NRRL 3495).